The following is a 459-amino-acid chain: Phosphoglucosamine mutase (459 aa).

Ser-105 (phosphoserine intermediate) is an active-site residue. Mg(2+)-binding residues include Ser-105, Asp-252, Asp-254, and Asp-256. Ser-105 is modified (phosphoserine).

It belongs to the phosphohexose mutase family. Requires Mg(2+) as cofactor. Post-translationally, activated by phosphorylation.

It carries out the reaction alpha-D-glucosamine 1-phosphate = D-glucosamine 6-phosphate. Functionally, catalyzes the conversion of glucosamine-6-phosphate to glucosamine-1-phosphate. This chain is Phosphoglucosamine mutase, found in Bifidobacterium adolescentis (strain ATCC 15703 / DSM 20083 / NCTC 11814 / E194a).